Reading from the N-terminus, the 1294-residue chain is MVSNSFWLFILLVSFIPISAWAESRDISTLFTLRDSITEGKGFLRNWFDSETPPCSWSGITCIGHNVVAIDLSSVPLYAPFPLCIGAFQSLVRLNFSGCGFSGELPEALGNLQNLQYLDLSNNELTGPIPISLYNLKMLKEMVLDYNSLSGQLSPAIAQLQHLTKLSISMNSISGSLPPDLGSLKNLELLDIKMNTFNGSIPATFGNLSCLLHFDASQNNLTGSIFPGITSLTNLLTLDLSSNSFEGTIPREIGQLENLELLILGKNDLTGRIPQEIGSLKQLKLLHLEECQFTGKIPWSISGLSSLTELDISDNNFDAELPSSMGELGNLTQLIAKNAGLSGNMPKELGNCKKLTVINLSFNALIGPIPEEFADLEAIVSFFVEGNKLSGRVPDWIQKWKNARSIRLGQNKFSGPLPVLPLQHLLSFAAESNLLSGSIPSHICQANSLHSLLLHHNNLTGTIDEAFKGCTNLTELNLLDNHIHGEVPGYLAELPLVTLELSQNKFAGMLPAELWESKTLLEISLSNNEITGPIPESIGKLSVLQRLHIDNNLLEGPIPQSVGDLRNLTNLSLRGNRLSGIIPLALFNCRKLATLDLSYNNLTGNIPSAISHLTLLDSLILSSNQLSGSIPAEICVGFENEAHPDSEFLQHHGLLDLSYNQLTGQIPTSIKNCAMVMVLNLQGNLLNGTIPVELGELTNLTSINLSFNEFVGPMLPWSGPLVQLQGLILSNNHLDGSIPAKIGQILPKIAVLDLSSNALTGTLPQSLLCNNYLNHLDVSNNHLSGHIQFSCPDGKEYSSTLLFFNSSSNHFSGSLDESISNFTQLSTLDIHNNSLTGRLPSALSDLSSLNYLDLSSNNLYGAIPCGICNIFGLSFANFSGNYIDMYSLADCAAGGICSTNGTDHKALHPYHRVRRAITICAFTFVIIIVLVLLAVYLRRKLVRSRPLAFESASKAKATVEPTSTDELLGKKSREPLSINLATFEHALLRVTADDILKATENFSKVHIIGDGGFGTVYKAALPEGRRVAIKRLHGGHQFQGDREFLAEMETIGKVKHPNLVPLLGYCVCGDERFLIYEYMENGSLEMWLRNRADALEALGWPDRLKICLGSARGLAFLHHGFVPHIIHRDMKSSNILLDENFEPRVSDFGLARIISACETHVSTDIAGTFGYIPPEYGLTMKSTTKGDVYSFGVVMLELLTGRPPTGQEEVQGGGNLVGWVRWMIARGKQNELFDPCLPVSSVWREQMARVLAIARDCTADEPFKRPTMLEVVKGLKMTHGMECGPLVVTVSRDM.

The N-terminal stretch at 1–22 (MVSNSFWLFILLVSFIPISAWA) is a signal peptide. LRR repeat units lie at residues 88-112 (FQSL…LGNL), 113-136 (QNLQ…LYNL), 138-160 (MLKE…IAQL), 161-184 (QHLT…LGSL), and 186-207 (NLEL…TFGN). 3 N-linked (GlcNAc...) asparagine glycosylation sites follow: asparagine 198, asparagine 207, and asparagine 220. LRR repeat units follow at residues 232–256 (LTNL…IGQL), 258–280 (NLEL…IGSL), 282–304 (QLKL…ISGL), 305–328 (SSLT…MGEL), 330–352 (NLTQ…LGNC), 353–376 (KKLT…FADL), 378–400 (AIVS…IQKW), 401–422 (KNAR…VLPL), 423–446 (QHLL…ICQA), 447–469 (NSLH…AFKG), 471–493 (TNLT…YLAE), 494–517 (LPLV…LWES), 519–541 (TLLE…IGKL), 542–565 (SVLQ…VGDL), 566–589 (RNLT…LFNC), 591–613 (KLAT…ISHL), 614–637 (TLLD…ICVG), 649–673 (LQHH…IKNC), 675–697 (MVMV…LGEL), 698–721 (TNLT…SGPL), 722–745 (VQLQ…IGQI), 746–770 (LPKI…LLCN), and 772–794 (YLNH…CPDG). Residues asparagine 330 and asparagine 359 are each glycosylated (N-linked (GlcNAc...) asparagine). N-linked (GlcNAc...) asparagine glycosylation is found at asparagine 458 and asparagine 472. N-linked (GlcNAc...) asparagine glycosylation is found at asparagine 567, asparagine 570, and asparagine 601. Residues asparagine 687, asparagine 699, and asparagine 704 are each glycosylated (N-linked (GlcNAc...) asparagine). Residues asparagine 805, asparagine 821, and asparagine 832 are each glycosylated (N-linked (GlcNAc...) asparagine). 2 LRR repeats span residues 822–846 (FTQL…LSDL) and 848–870 (SLNY…ICNI). Residues 917-937 (ITICAFTFVIIIVLVLLAVYL) form a helical membrane-spanning segment. The Protein kinase domain occupies 1002–1282 (FSKVHIIGDG…KGLKMTHGME (281 aa)). ATP-binding positions include 1008–1016 (IGDGGFGTV) and lysine 1030. Aspartate 1129 (proton acceptor) is an active-site residue.

It belongs to the protein kinase superfamily. Ser/Thr protein kinase family. Interacts with TDL1A. Expressed in anthers and ovules during meiosis.

It localises to the cell membrane. It carries out the reaction L-seryl-[protein] + ATP = O-phospho-L-seryl-[protein] + ADP + H(+). It catalyses the reaction L-threonyl-[protein] + ATP = O-phospho-L-threonyl-[protein] + ADP + H(+). Receptor-like kinase that plays important roles in restricting the number of cells entering into male and female sporogenesis. Involved in cell specification during anther development and initiation of anther wall formation. The chain is Leucine-rich repeat receptor protein kinase MSP1 from Oryza sativa subsp. japonica (Rice).